The primary structure comprises 159 residues: Cyclin-dependent kinase inhibitor 1 (159 aa).

Ser2 carries the post-translational modification N-acetylserine. Residue Ser2 forms a Glycyl serine ester (Ser-Gly) (interchain with G-Cter in ubiquitin) linkage. The C4-type zinc finger occupies 12–40; that stretch reads HRSKVCRCLFGPVDSEQLRRDCDALMAGC. A required for binding cyclins region spans residues 17 to 24; it reads CRCLFGPV. A required for binding CDKs region spans residues 53–58; that stretch reads VTETPL. Ser78 carries the post-translational modification Phosphoserine; by NUAK1. The tract at residues 78-106 is disordered; sequence SPGSRSRDDLGGDKRPSTSSALLQGPAPE. Basic and acidic residues predominate over residues 82 to 93; that stretch reads RSRDDLGGDKRP. Residue Ser112 is modified to Phosphoserine; by GSK3-beta. The segment at 118–142 is disordered; it reads VSERPEDSPGGPGTSQGRKRRQTSL. Ser125 carries the phosphoserine modification. The PIP-box K+4 motif signature appears at 135-159; it reads RKRRQTSLTDFYHSKRRLVFCKRKP. The residue at position 140 (Thr140) is a Phosphothreonine; by PKA, PKB/AKT1, PIM1 and PIM2. A Phosphoserine; by NUAK1 modification is found at Ser141. The tract at residues 147–159 is interaction with TRIM39; it reads HSKRRLVFCKRKP.

It belongs to the CDI family. As to quaternary structure, interacts with HDAC1; the interaction is prevented by competitive binding of C10orf90/FATS to HDAC1 facilitating acetylation and protein stabilization of CDKN1A/p21. Interacts with MKRN1. Interacts with PSMA3. Interacts with PCNA. Component of the ternary complex, cyclin D-CDK4-CDKN1A. Interacts (via its N-terminal domain) with CDK4; the interaction promotes the assembly of the cyclin D-CDK4 complex, its nuclear translocation and promotes the cyclin D-dependent enzyme activity of CDK4. Binding to CDK2 leads to CDK2/cyclin E inactivation at the G1-S phase DNA damage checkpoint, thereby arresting cells at the G1-S transition during DNA repair. Interacts with PIM1. Interacts with STK11. Interacts with NUAK1. Interacts with DTL and TRIM39. Interacts with PKP3; the interaction sequesters CDKN1A to the cytoplasm thereby repressing its role as an inhibitor of CDK4- and CDK6-driven RB1 phosphorylation. Phosphorylation of Thr-140 or Ser-141 impairs binding to PCNA. Phosphorylation at Ser-112 by GSK3-beta enhances ubiquitination by the DCX(DTL) complex. Phosphorylation of Thr-140 by PIM2 enhances its stability and inhibits cell proliferation. Phosphorylation of Thr-140 by PIM1 results in the relocation of CDKN1A to the cytoplasm and enhanced CDKN1A protein stability. UV radiation-induced phosphorylation at Ser-78 and Ser-141 by NUAK1 leads to its degradation. Post-translationally, ubiquitinated by MKRN1; leading to polyubiquitination and 26S proteasome-dependent degradation. Ubiquitinated by the DCX(DTL) complex, also named CRL4(CDT2) complex, leading to its degradation during S phase or following UV irradiation. Ubiquitination by the DCX(DTL) complex is essential to control replication licensing and is PCNA-dependent: interacts with PCNA via its PIP-box, while the presence of the containing the 'K+4' motif in the PIP box, recruit the DCX(DTL) complex, leading to its degradation. Ubiquitination at Ser-2 leads to degradation by the proteasome pathway. Ubiquitinated by RNF114; leading to proteasomal degradation. In terms of processing, acetylation leads to protein stability. Acetylated in vitro on Lys-136, Lys-149, Lys-156 and Lys-158. Deacetylation by HDAC1 is prevented by competitive binding of C10orf90/FATS to HDAC1. Expressed in keratinocytes (at protein level).

It is found in the cytoplasm. The protein localises to the nucleus. May be involved in p53/TP53 mediated inhibition of cellular proliferation in response to DNA damage. Binds to and inhibits cyclin-dependent kinase activity, preventing phosphorylation of critical cyclin-dependent kinase substrates and blocking cell cycle progression. Functions in the nuclear localization and assembly of cyclin D-CDK4 complex and promotes its kinase activity towards RB1. At higher stoichiometric ratios, inhibits the kinase activity of the cyclin D-CDK4 complex. Inhibits DNA synthesis by DNA polymerase delta by competing with POLD3 for PCNA binding. Plays an important role in controlling cell cycle progression and DNA damage-induced G2 arrest. In terms of biological role, plays an important role in controlling cell cycle progression and DNA damage-induced G2 arrest. Involved in p53/TP53 mediated inhibition of cellular proliferation in response to DNA damage. Also involved in p53-independent DNA damage-induced G2 arrest mediated by CREB3L1 in astrocytes and osteoblasts. Binds to and inhibits cyclin-dependent kinase activity, preventing phosphorylation of critical cyclin-dependent kinase substrates and blocking cell cycle progression. Functions in the nuclear localization and assembly of cyclin D-CDK4 complex and promotes its kinase activity towards RB1. At higher stoichiometric ratios, inhibits the kinase activity of the cyclin D-CDK4 complex. Inhibits DNA synthesis by DNA polymerase delta by competing with POLD3 for PCNA binding. Negatively regulates the CDK4- and CDK6-driven phosphorylation of RB1 in keratinocytes, thereby resulting in the release of E2F1 and subsequent transcription of E2F1-driven G1/S phase promoting genes. The chain is Cyclin-dependent kinase inhibitor 1 (Cdkn1a) from Mus musculus (Mouse).